The following is a 237-amino-acid chain: Phosphoribosylaminoimidazole-succinocarboxamide synthase (237 aa).

Belongs to the SAICAR synthetase family.

The enzyme catalyses 5-amino-1-(5-phospho-D-ribosyl)imidazole-4-carboxylate + L-aspartate + ATP = (2S)-2-[5-amino-1-(5-phospho-beta-D-ribosyl)imidazole-4-carboxamido]succinate + ADP + phosphate + 2 H(+). It participates in purine metabolism; IMP biosynthesis via de novo pathway; 5-amino-1-(5-phospho-D-ribosyl)imidazole-4-carboxamide from 5-amino-1-(5-phospho-D-ribosyl)imidazole-4-carboxylate: step 1/2. The chain is Phosphoribosylaminoimidazole-succinocarboxamide synthase from Listeria innocua serovar 6a (strain ATCC BAA-680 / CLIP 11262).